A 472-amino-acid polypeptide reads, in one-letter code: Tyrosine--tRNA ligase, mitochondrial (472 aa).

An L-tyrosine-binding site is contributed by Y72. An ATP-binding site is contributed by D76. Positions 77 to 86 (PTGDSLHVGH) match the 'HIGH' region motif. 5 residues coordinate L-tyrosine: D116, Y216, Q220, D223, and Q242. ATP-binding residues include I269 and K279. Residues 276–280 (KLGKS) carry the 'KMSKS' region motif. Residues K350 and K362 each carry the N6-acetyllysine modification.

The protein belongs to the class-I aminoacyl-tRNA synthetase family. In terms of assembly, homodimer.

The protein resides in the mitochondrion matrix. It catalyses the reaction tRNA(Tyr) + L-tyrosine + ATP = L-tyrosyl-tRNA(Tyr) + AMP + diphosphate + H(+). Catalyzes the attachment of tyrosine to tRNA(Tyr) in a two-step reaction: tyrosine is first activated by ATP to form Tyr-AMP and then transferred to the acceptor end of tRNA(Tyr). This is Tyrosine--tRNA ligase, mitochondrial (Yars2) from Mus musculus (Mouse).